We begin with the raw amino-acid sequence, 856 residues long: V-type proton ATPase 116 kDa subunit a 2 (856 aa).

Over 1 to 393 (MGSLFRSESM…DAYGVGSYRE (393 aa)) the chain is Cytoplasmic. A helical membrane pass occupies residues 394–412 (VNPALFTIITFPFLFAVMF). Residues 413-414 (GD) lie on the Vacuolar side of the membrane. Residues 415–431 (FGHGFVMFLFALLLVLN) traverse the membrane as a helical segment. Over 432-445 (ENHPRLSQSQEILR) the chain is Cytoplasmic. The chain crosses the membrane as a helical span at residues 446–475 (MFFDGRYILLLMGLFSVYTGLIYNDCFSKS). Over 476–549 (VNLFGSGWNV…ATNRLTFLNS (74 aa)) the chain is Vacuolar. The helical transmembrane segment at 550–569 (FKMKMSVILGIFHMTFGVVL) threads the bilayer. Residues 570-587 (GIFNHLHFRKKFNVYLVS) are Cytoplasmic-facing. The helical transmembrane segment at 588–608 (VPEILFMLCIFGYLIFMIIYK) threads the bilayer. Residues 609-651 (WLAYSAETSREAPSILIEFINMFLFPTSKTHGLYPGQAHVQRV) are Vacuolar-facing. A helical transmembrane segment spans residues 652–671 (LVALTVLAVPVLFLGKPLFL). At 672–739 (LWLHNGRNCF…EILMTQAIHS (68 aa)) the chain is on the cytoplasmic side. Residues Ser-695 and Ser-700 each carry the phosphoserine modification. A helical transmembrane segment spans residues 740–764 (IEYCLGCISNTASYLRLWALSLAHA). Residues 765–785 (QLSDVLWAMLMRVGLRVDTTY) lie on the Vacuolar side of the membrane. A helical membrane pass occupies residues 786 to 824 (GVLLLLPVMAFFAVLTIFILLVMEGLSAFLHAIRLHWVE). Topologically, residues 825-856 (FQNKFYVGAGTKFVPFSFSLLSSKFSNDDSIA) are cytoplasmic.

It belongs to the V-ATPase 116 kDa subunit family. In terms of assembly, V-ATPase is a heteromultimeric enzyme made up of two complexes: the ATP-hydrolytic V1 complex and the proton translocation V0 complex. The V1 complex consists of three catalytic AB heterodimers that form a heterohexamer, three peripheral stalks each consisting of EG heterodimers, one central rotor including subunits D and F, and the regulatory subunits C and H. The proton translocation complex V0 consists of the proton transport subunit a, a ring of proteolipid subunits c9c'', rotary subunit d, subunits e and f, and the accessory subunits ATP6AP1/Ac45 and ATP6AP2/PRR. Directly interacts with PSCD2 through its N-terminal cytosolic tail in an intra-endosomal acidification-dependent manner. Disruption of this interaction results in the inhibition of endocytosis. Interacts with SPAAR. In terms of tissue distribution, relatively high expression in kidney and liver. Lower levels in the spleen, testis, and skeletal muscle. Also expressed in the thymus.

The protein resides in the cell membrane. Its subcellular location is the endosome membrane. Its function is as follows. Subunit of the V0 complex of vacuolar(H+)-ATPase (V-ATPase), a multisubunit enzyme composed of a peripheral complex (V1) that hydrolyzes ATP and a membrane integral complex (V0) that translocates protons. V-ATPase is responsible for acidifying and maintaining the pH of intracellular compartments and in some cell types, is targeted to the plasma membrane, where it is responsible for acidifying the extracellular environment. Essential component of the endosomal pH-sensing machinery. May play a role in maintaining the Golgi functions, such as glycosylation maturation, by controlling the Golgi pH. In aerobic conditions, involved in intracellular iron homeostasis, thus triggering the activity of Fe(2+) prolyl hydroxylase (PHD) enzymes, and leading to HIF1A hydroxylation and subsequent proteasomal degradation. The sequence is that of V-type proton ATPase 116 kDa subunit a 2 (Atp6v0a2) from Mus musculus (Mouse).